The chain runs to 1390 residues: DNA-directed RNA polymerase subunit beta (1390 aa).

Belongs to the RNA polymerase beta chain family. The RNAP catalytic core consists of 2 alpha, 1 beta, 1 beta' and 1 omega subunit. When a sigma factor is associated with the core the holoenzyme is formed, which can initiate transcription.

It carries out the reaction RNA(n) + a ribonucleoside 5'-triphosphate = RNA(n+1) + diphosphate. DNA-dependent RNA polymerase catalyzes the transcription of DNA into RNA using the four ribonucleoside triphosphates as substrates. In Methylobacillus flagellatus (strain ATCC 51484 / DSM 6875 / VKM B-1610 / KT), this protein is DNA-directed RNA polymerase subunit beta.